Reading from the N-terminus, the 253-residue chain is Regulatory protein VirG (253 aa).

Positions 15-129 (HVLVIDDDVA…EFLARIRVAL (115 aa)) constitute a Response regulatory domain. At Asp-64 the chain carries 4-aspartylphosphate. The segment at residues 141-241 (RRSFSFADWT…ARGAGYFFDA (101 aa)) is a DNA-binding region (ompR/PhoB-type).

Phosphorylated by wide host range (WHR) VirA protein.

Its subcellular location is the cytoplasm. In terms of biological role, virG is required for the positive regulation of at least two vir loci encoded by the Ti plasmid of A.tumefaciens. The sequence is that of Regulatory protein VirG (virG) from Agrobacterium fabrum (strain C58 / ATCC 33970) (Agrobacterium tumefaciens (strain C58)).